We begin with the raw amino-acid sequence, 79 residues long: Phosphoribosylformylglycinamidine synthase subunit PurS (79 aa).

This sequence belongs to the PurS family. Homodimer. Part of the FGAM synthase complex composed of 1 PurL, 1 PurQ and 2 PurS subunits.

It localises to the cytoplasm. The catalysed reaction is N(2)-formyl-N(1)-(5-phospho-beta-D-ribosyl)glycinamide + L-glutamine + ATP + H2O = 2-formamido-N(1)-(5-O-phospho-beta-D-ribosyl)acetamidine + L-glutamate + ADP + phosphate + H(+). It participates in purine metabolism; IMP biosynthesis via de novo pathway; 5-amino-1-(5-phospho-D-ribosyl)imidazole from N(2)-formyl-N(1)-(5-phospho-D-ribosyl)glycinamide: step 1/2. Its function is as follows. Part of the phosphoribosylformylglycinamidine synthase complex involved in the purines biosynthetic pathway. Catalyzes the ATP-dependent conversion of formylglycinamide ribonucleotide (FGAR) and glutamine to yield formylglycinamidine ribonucleotide (FGAM) and glutamate. The FGAM synthase complex is composed of three subunits. PurQ produces an ammonia molecule by converting glutamine to glutamate. PurL transfers the ammonia molecule to FGAR to form FGAM in an ATP-dependent manner. PurS interacts with PurQ and PurL and is thought to assist in the transfer of the ammonia molecule from PurQ to PurL. The polypeptide is Phosphoribosylformylglycinamidine synthase subunit PurS (Mycobacterium leprae (strain TN)).